Here is a 337-residue protein sequence, read N- to C-terminus: B1 bradykinin receptor (337 aa).

Residues 1–41 lie on the Extracellular side of the membrane; the sequence is MASEVLLELQPSNRSLQAPANITSCESALEDWDLLYRVLPG. N-linked (GlcNAc...) asparagine glycans are attached at residues N13 and N21. The helical transmembrane segment at 42-62 threads the bilayer; that stretch reads FVITICFFGLLGNLLVLSFFL. Residues 63–83 are Cytoplasmic-facing; the sequence is LPWRQWWWQQRQRQQRLTIAE. The helical transmembrane segment at 84–104 threads the bilayer; the sequence is IYLANLAASDLVFVLGLPFWA. Residues 105-121 are Extracellular-facing; the sequence is ENIGNRFNWPFGTDLCR. C120 and C199 are joined by a disulfide. A helical membrane pass occupies residues 122–142; the sequence is VVSGVIKANLFVSIFLVVAIS. The Cytoplasmic portion of the chain corresponds to 143–164; sequence QDRYRLLVYPMTSWGYRRRRQA. Residues 165-185 form a helical membrane-spanning segment; that stretch reads QATCLLIWVAGGLLSIPTFLL. At 186–217 the chain is on the extracellular side; it reads RSVKVVPDLNVSACILLFPHEAWHFARMVELN. A glycan (N-linked (GlcNAc...) asparagine) is linked at N195. A helical membrane pass occupies residues 218–238; that stretch reads VLGFLLPVTAIIFFNYHILAS. Residues 239–261 lie on the Cytoplasmic side of the membrane; sequence LRGQKEASRTRCGGPKGSKTTGL. A helical transmembrane segment spans residues 262–282; it reads ILTLVASFLVCWCPYHFFAFL. Residues 283–305 lie on the Extracellular side of the membrane; that stretch reads DFLVQVRVIQDCSWKEITDLGLQ. A helical transmembrane segment spans residues 306 to 326; the sequence is LANFFAFVNSCLNPLIYVFAG. The Cytoplasmic portion of the chain corresponds to 327-337; that stretch reads RLLKTRVLGTL.

The protein belongs to the G-protein coupled receptor 1 family. Bradykinin receptor subfamily. BDKRB1 sub-subfamily. In terms of tissue distribution, expressed in bladder, lung, duodenum, kidney, uterus, thymus, salivary gland, testis, prostate, macrophages, aorta, spleen and heart.

Its subcellular location is the cell membrane. This is a receptor for bradykinin. Could be a factor in chronic pain and inflammation. The polypeptide is B1 bradykinin receptor (Bdkrb1) (Rattus norvegicus (Rat)).